A 270-amino-acid polypeptide reads, in one-letter code: Acyl-[acyl-carrier-protein]--UDP-N-acetylglucosamine O-acyltransferase (270 aa).

This sequence belongs to the transferase hexapeptide repeat family. LpxA subfamily. In terms of assembly, homotrimer.

It is found in the cytoplasm. The enzyme catalyses a (3R)-hydroxyacyl-[ACP] + UDP-N-acetyl-alpha-D-glucosamine = a UDP-3-O-[(3R)-3-hydroxyacyl]-N-acetyl-alpha-D-glucosamine + holo-[ACP]. Its pathway is glycolipid biosynthesis; lipid IV(A) biosynthesis; lipid IV(A) from (3R)-3-hydroxytetradecanoyl-[acyl-carrier-protein] and UDP-N-acetyl-alpha-D-glucosamine: step 1/6. Involved in the biosynthesis of lipid A, a phosphorylated glycolipid that anchors the lipopolysaccharide to the outer membrane of the cell. In Helicobacter pylori (strain J99 / ATCC 700824) (Campylobacter pylori J99), this protein is Acyl-[acyl-carrier-protein]--UDP-N-acetylglucosamine O-acyltransferase.